The primary structure comprises 129 residues: Large ribosomal subunit protein uL22 (129 aa).

The protein belongs to the universal ribosomal protein uL22 family. As to quaternary structure, part of the 50S ribosomal subunit.

In terms of biological role, this protein binds specifically to 23S rRNA; its binding is stimulated by other ribosomal proteins, e.g. L4, L17, and L20. It is important during the early stages of 50S assembly. It makes multiple contacts with different domains of the 23S rRNA in the assembled 50S subunit and ribosome. The globular domain of the protein is located near the polypeptide exit tunnel on the outside of the subunit, while an extended beta-hairpin is found that lines the wall of the exit tunnel in the center of the 70S ribosome. In Mesorhizobium japonicum (strain LMG 29417 / CECT 9101 / MAFF 303099) (Mesorhizobium loti (strain MAFF 303099)), this protein is Large ribosomal subunit protein uL22.